Here is an 856-residue protein sequence, read N- to C-terminus: Rod cGMP-specific 3',5'-cyclic phosphodiesterase subunit beta (856 aa).

The residue at position 2 (S2) is an N-acetylserine. GAF domains are found at residues 71-220 and 252-429; these read NMER…TLNL and DIER…GWSV. Residues 481 to 814 enclose the PDEase domain; it reads EEDELGKILK…KEWKALADEY (334 aa). The active-site Proton donor is the H557. A divalent metal cation-binding residues include H561, H597, D598, and D718. C853 is lipidated: S-geranylgeranyl cysteine. The propeptide at 854–856 is removed in mature form; sequence CIL.

Belongs to the cyclic nucleotide phosphodiesterase family. Oligomer composed of two catalytic chains (alpha and beta), an inhibitory chain (gamma) and the delta chain. A divalent metal cation serves as cofactor.

It localises to the membrane. The protein resides in the cell projection. Its subcellular location is the cilium. It is found in the photoreceptor outer segment. It carries out the reaction 3',5'-cyclic GMP + H2O = GMP + H(+). Its function is as follows. Rod-specific cGMP phosphodiesterase that catalyzes the hydrolysis of 3',5'-cyclic GMP. Necessary for the formation of a functional phosphodiesterase holoenzyme. Involved in retinal circadian rhythm photoentrainment via modulation of UVA and orange light-induced phase-shift of the retina clock. May participate in processes of transmission and amplification of the visual signal. The chain is Rod cGMP-specific 3',5'-cyclic phosphodiesterase subunit beta from Mus musculus (Mouse).